The chain runs to 592 residues: Glutathione-regulated potassium-efflux system protein KefB (592 aa).

A run of 13 helical transmembrane segments spans residues 4–24 (SDFL…VPLA), 29–49 (IGAV…GLGF), 55–75 (EILH…GLEL), 87–107 (IFGV…GLLM), 115–135 (AAVV…LQLM), 152–172 (VLLF…LLAG), 177–197 (HFDW…LIGG), 207–227 (FIAA…LVLG), 230–250 (LFMD…GVLL), 268–288 (GLLL…GVLY), 291–311 (LLWV…VLYL), 324–344 (MQFA…FSTA), and 356–376 (ALLL…MKLV). The region spanning 400–519 (KPQVIVVGFG…AGVTQFSRET (120 aa)) is the RCK N-terminal domain.

The protein belongs to the monovalent cation:proton antiporter 2 (CPA2) transporter (TC 2.A.37) family. KefB subfamily. As to quaternary structure, interacts with the regulatory subunit KefG.

It localises to the cell inner membrane. In terms of biological role, pore-forming subunit of a potassium efflux system that confers protection against electrophiles. Catalyzes K(+)/H(+) antiport. This is Glutathione-regulated potassium-efflux system protein KefB from Escherichia coli O157:H7.